The following is a 452-amino-acid chain: Probable pectate lyase 9 (452 aa).

An N-terminal signal peptide occupies residues 1–25 (MATSSLKLTSACFVLLFIFVGCVLT). 4 N-linked (GlcNAc...) asparagine glycosylation sites follow: N88, N139, N214, and N233. Position 250 (D250) interacts with Ca(2+). N271 carries an N-linked (GlcNAc...) asparagine glycan. Ca(2+) is bound by residues D274 and D278. N281 and N305 each carry an N-linked (GlcNAc...) asparagine glycan. R330 is a catalytic residue. N-linked (GlcNAc...) asparagine glycosylation occurs at N374.

It belongs to the polysaccharide lyase 1 family. The cofactor is Ca(2+).

It catalyses the reaction Eliminative cleavage of (1-&gt;4)-alpha-D-galacturonan to give oligosaccharides with 4-deoxy-alpha-D-galact-4-enuronosyl groups at their non-reducing ends.. It participates in glycan metabolism; pectin degradation; 2-dehydro-3-deoxy-D-gluconate from pectin: step 2/5. The polypeptide is Probable pectate lyase 9 (Arabidopsis thaliana (Mouse-ear cress)).